The following is a 167-amino-acid chain: NADH-quinone oxidoreductase subunit I (167 aa).

2 consecutive 4Fe-4S ferredoxin-type domains span residues 59-88 (RKYK…IEAQ) and 98-127 (VRYD…EGPN). Cys-68, Cys-71, Cys-74, Cys-78, Cys-107, Cys-110, Cys-113, and Cys-117 together coordinate [4Fe-4S] cluster.

Belongs to the complex I 23 kDa subunit family. As to quaternary structure, NDH-1 is composed of 14 different subunits. Subunits NuoA, H, J, K, L, M, N constitute the membrane sector of the complex. Requires [4Fe-4S] cluster as cofactor.

It localises to the cell inner membrane. It catalyses the reaction a quinone + NADH + 5 H(+)(in) = a quinol + NAD(+) + 4 H(+)(out). In terms of biological role, NDH-1 shuttles electrons from NADH, via FMN and iron-sulfur (Fe-S) centers, to quinones in the respiratory chain. The immediate electron acceptor for the enzyme in this species is believed to be ubiquinone. Couples the redox reaction to proton translocation (for every two electrons transferred, four hydrogen ions are translocated across the cytoplasmic membrane), and thus conserves the redox energy in a proton gradient. The chain is NADH-quinone oxidoreductase subunit I from Ehrlichia canis (strain Jake).